The primary structure comprises 375 residues: Chaperone protein DnaJ (375 aa).

Positions 4–68 (DYYEVLGVGK…QKRAQYDRFG (65 aa)) constitute a J domain. The CR-type zinc-finger motif lies at 129–211 (GKETDVEIPK…CRGSGRVKVR (83 aa)). The Zn(2+) site is built by cysteine 142, cysteine 145, cysteine 159, cysteine 162, cysteine 185, cysteine 188, cysteine 199, and cysteine 202. 4 CXXCXGXG motif repeats span residues 142-149 (CDTCHGSG), 159-166 (CKTCSGTG), 185-192 (CTTCEGKG), and 199-206 (CSSCRGSG). Positions 349–375 (LSGEKPGQHGGEDEGFFEKMKRAFRGE) are disordered.

It belongs to the DnaJ family. Homodimer. Zn(2+) is required as a cofactor.

It localises to the cytoplasm. In terms of biological role, participates actively in the response to hyperosmotic and heat shock by preventing the aggregation of stress-denatured proteins and by disaggregating proteins, also in an autonomous, DnaK-independent fashion. Unfolded proteins bind initially to DnaJ; upon interaction with the DnaJ-bound protein, DnaK hydrolyzes its bound ATP, resulting in the formation of a stable complex. GrpE releases ADP from DnaK; ATP binding to DnaK triggers the release of the substrate protein, thus completing the reaction cycle. Several rounds of ATP-dependent interactions between DnaJ, DnaK and GrpE are required for fully efficient folding. Also involved, together with DnaK and GrpE, in the DNA replication of plasmids through activation of initiation proteins. This Brevibacillus choshinensis protein is Chaperone protein DnaJ.